Reading from the N-terminus, the 369-residue chain is Peptide chain release factor 2 (369 aa).

Gln251 bears the N5-methylglutamine mark.

The protein belongs to the prokaryotic/mitochondrial release factor family. Post-translationally, methylated by PrmC. Methylation increases the termination efficiency of RF2.

It localises to the cytoplasm. Peptide chain release factor 2 directs the termination of translation in response to the peptide chain termination codons UGA and UAA. This is Peptide chain release factor 2 from Chlamydia trachomatis serovar A (strain ATCC VR-571B / DSM 19440 / HAR-13).